Here is a 700-residue protein sequence, read N- to C-terminus: Putative cysteine-rich receptor-like protein kinase 30 (700 aa).

A signal peptide spans 1-24 (MRQNNLFSLIFWLVPVSLIIVVSA). 2 Gnk2-homologous domains span residues 25–129 (QLCS…NQPS) and 135–250 (LESV…LYPF). The Extracellular segment spans residues 25 to 285 (QLCSEKFGTF…KDEKTIHTGT (261 aa)). N-linked (GlcNAc...) asparagine glycans are attached at residues N63, N105, N146, N150, and N191. The helical transmembrane segment at 286–306 (IIGIVIVVAMVIIMALLALGV) threads the bilayer. Topologically, residues 307–700 (SVCRSRKKYQ…SKSMYRNTED (394 aa)) are cytoplasmic. The Protein kinase domain occupies 346–626 (FLASNKIGQG…IFQMLTNSSI (281 aa)). ATP is bound by residues 352–360 (IGQGGFGEV) and K374. D474 (proton acceptor) is an active-site residue. Position 478 is a phosphoserine (S478). The residue at position 514 (T514) is a Phosphothreonine. Y522 is subject to Phosphotyrosine.

It belongs to the protein kinase superfamily. Ser/Thr protein kinase family. CRK subfamily.

Its subcellular location is the membrane. It catalyses the reaction L-seryl-[protein] + ATP = O-phospho-L-seryl-[protein] + ADP + H(+). The enzyme catalyses L-threonyl-[protein] + ATP = O-phospho-L-threonyl-[protein] + ADP + H(+). The polypeptide is Putative cysteine-rich receptor-like protein kinase 30 (CRK30) (Arabidopsis thaliana (Mouse-ear cress)).